The primary structure comprises 818 residues: Cytosolic phospholipase A2 delta (818 aa).

The region spanning 5-124 (SPGGPPGHPY…LPGKLLRKTF (120 aa)) is the C2 domain. Ca(2+) is bound by residues Asp38, Asp44, Asp94, Asp96, and Asp102. The PLA2c domain maps to 273–818 (GCPEELAVHL…LEARPPRAQT (546 aa)). 330 to 331 (GG) provides a ligand contact to substrate. Ser361 serves as the catalytic Nucleophile. Residue Asp647 is the Proton acceptor of the active site.

Ca(2+) is required as a cofactor. In terms of tissue distribution, expressed in stratified squamous epithelia, such as those in skin and cervix, but not in other tissues. Strongly expressed in the upper spinous layer of the psoriatic epidermis, expressed weakly and discontinuously in atopic dermatitis and mycosis fungoides, and not detected in the epidermis of normal skin.

It localises to the cytoplasm. It is found in the cytosol. Its subcellular location is the membrane. The catalysed reaction is a 1,2-diacyl-sn-glycero-3-phosphocholine + H2O = a 1-acyl-sn-glycero-3-phosphocholine + a fatty acid + H(+). It carries out the reaction 1-hexadecanoyl-2-(5Z,8Z,11Z,14Z-eicosatetraenoyl)-sn-glycero-3-phosphocholine + H2O = 1-hexadecanoyl-sn-glycero-3-phosphocholine + (5Z,8Z,11Z,14Z)-eicosatetraenoate + H(+). It catalyses the reaction 1-hexadecanoyl-2-(9Z,12Z-octadecadienoyl)-sn-glycero-3-phosphocholine + H2O = (9Z,12Z)-octadecadienoate + 1-hexadecanoyl-sn-glycero-3-phosphocholine + H(+). The enzyme catalyses 1-hexadecanoyl-2-(9Z-octadecenoyl)-sn-glycero-3-phosphocholine + H2O = 1-hexadecanoyl-sn-glycero-3-phosphocholine + (9Z)-octadecenoate + H(+). The catalysed reaction is 1-hexadecanoyl-2-(5Z,8Z,11Z,14Z-eicosatetraenoyl)-sn-glycero-3-phosphoethanolamine + H2O = 1-hexadecanoyl-sn-glycero-3-phosphoethanolamine + (5Z,8Z,11Z,14Z)-eicosatetraenoate + H(+). It carries out the reaction 1-hexadecanoyl-2-(9Z,12Z-octadecadienoyl)-sn-glycero-3-phosphoethanolamine + H2O = 1-hexadecanoyl-sn-glycero-3-phosphoethanolamine + (9Z,12Z)-octadecadienoate + H(+). The protein operates within lipid metabolism; fatty acid metabolism. With respect to regulation, stimulated by cytosolic Ca(2+). Calcium-dependent phospholipase A2 that selectively hydrolyzes glycerophospholipids in the sn-2 position. Has a preference for linoleic acid at the sn-2 position. The chain is Cytosolic phospholipase A2 delta from Homo sapiens (Human).